Reading from the N-terminus, the 57-residue chain is Large ribosomal subunit protein bL33 (57 aa).

Belongs to the bacterial ribosomal protein bL33 family.

In Akkermansia muciniphila (strain ATCC BAA-835 / DSM 22959 / JCM 33894 / BCRC 81048 / CCUG 64013 / CIP 107961 / Muc), this protein is Large ribosomal subunit protein bL33.